A 245-amino-acid polypeptide reads, in one-letter code: Ubiquinone/menaquinone biosynthesis C-methyltransferase UbiE (245 aa).

S-adenosyl-L-methionine is bound by residues T71, D92, and 118–119 (DA).

The protein belongs to the class I-like SAM-binding methyltransferase superfamily. MenG/UbiE family.

The enzyme catalyses a 2-demethylmenaquinol + S-adenosyl-L-methionine = a menaquinol + S-adenosyl-L-homocysteine + H(+). The catalysed reaction is a 2-methoxy-6-(all-trans-polyprenyl)benzene-1,4-diol + S-adenosyl-L-methionine = a 5-methoxy-2-methyl-3-(all-trans-polyprenyl)benzene-1,4-diol + S-adenosyl-L-homocysteine + H(+). The protein operates within quinol/quinone metabolism; menaquinone biosynthesis; menaquinol from 1,4-dihydroxy-2-naphthoate: step 2/2. It functions in the pathway cofactor biosynthesis; ubiquinone biosynthesis. Functionally, methyltransferase required for the conversion of demethylmenaquinol (DMKH2) to menaquinol (MKH2) and the conversion of 2-polyprenyl-6-methoxy-1,4-benzoquinol (DDMQH2) to 2-polyprenyl-3-methyl-6-methoxy-1,4-benzoquinol (DMQH2). In Neisseria meningitidis serogroup C / serotype 2a (strain ATCC 700532 / DSM 15464 / FAM18), this protein is Ubiquinone/menaquinone biosynthesis C-methyltransferase UbiE.